The following is a 321-amino-acid chain: Chemotaxis protein CheV1 (321 aa).

The CheW-like domain occupies 19–177; the sequence is ELQLLCFRLG…IEKMLIDVFP (159 aa). A Response regulatory domain is found at 198–319; that stretch reads CVLLADDSPS…IQRVVKQFLE (122 aa). Residue aspartate 252 is modified to 4-aspartylphosphate.

In terms of biological role, plays an essential role in chemotaxis signal transduction system in order to colonize the host stomach. May act as a phosphate sink to control the flow of phosphate to CheAY. This chain is Chemotaxis protein CheV1, found in Helicobacter pylori (strain ATCC 700392 / 26695) (Campylobacter pylori).